We begin with the raw amino-acid sequence, 1294 residues long: Unconventional myosin-VI (1294 aa).

The 52-residue stretch at 2 to 53 folds into the Myosin N-terminal SH3-like domain; that stretch reads EDGKPVWAPHPTDGFQMGNIVDIGPDSLTIEPLNQKGKTFLALINQVFPAEE. The 715-residue stretch at 57-771 folds into the Myosin motor domain; the sequence is KDVEDNCSLM…KFAEFDQIMK (715 aa). Residue 151–158 coordinates ATP; sequence GESGAGKT. Serine 267 carries the phosphoserine modification. Positions 273 to 317 are responsible for slow ATPase activity; it reads YLNRGCTRYFANKETDKQILQNRKSPEYLKAGSMKDPLLDDHGDF. Threonine 405 carries the phosphothreonine modification. Serine 604 carries the phosphoserine modification. An actin-binding region spans residues 665-672; sequence FIRCIKPN. Residues 782–810 form a required for binding calmodulin region; that stretch reads KRVNHWLTCSRWKKVQWCSLSVIKLKNKI. The 21-residue stretch at 814 to 834 folds into the IQ domain; it reads AEACIKMQKTIRMWLCKRRHK. The segment at 835–916 is three-helix bundle; it reads PRIDGLVKVG…EELLSALQKK (82 aa). The tract at residues 917-984 is SAH; it reads KQQEEEAERL…EDDEKRIQAE (68 aa). A disordered region spans residues 934 to 955; that stretch reads EKERKRREEDEKRRRKEEEERR. The residue at position 1025 (serine 1025) is a Phosphoserine. Residues 1060–1285 are interaction with TAX1BP1 and CALCOCO2/NDP52; sequence KEMSEFLSRG…ESRQARPTYA (226 aa). Residues 1116-1118 are interaction with OPTN; sequence RRL. Serine 1155 bears the Phosphoserine mark. The segment at 1157 to 1285 is interaction with TOM1; that stretch reads QQNPAAQIPA…ESRQARPTYA (129 aa).

This sequence belongs to the TRAFAC class myosin-kinesin ATPase superfamily. Myosin family. As to quaternary structure, homodimer; dimerization seems to implicate the unfolding of the three-helix bundle region creating an additional calmodulin binding site, and cargo binding. Able to function as a monomer under specific conditions in vitro. Forms a complex with CFTR and DAB2 in the apical membrane of epithelial cells. Component of the DISP/DOCK7-induced septin displacement complex, at least composed of DOCK7, LRCH3 and MYO6. Binding to calmodulin through a unique insert, not found in other myosins, located in the neck region between the motor domain and the IQ domain appears to contribute to the directionality reversal. This interaction occurs only if the C-terminal lobe of calmodulin is occupied by calcium. Interaction with F-actin/ACTN1 occurs only at the apical brush border domain of the proximal tubule cells. Interacts with DAB2. In vitro, the C-terminal globular tail binds a C-terminal region of DAB2. Interacts with CFTR. Interacts with CABP5. Interacts with TOM1. Interacts with OPTN. Interacts with TAX1BP1 and CALCOCO2/NDP52. Interacts with TOM1L2. Interacts with CLIC5; may work together in a complex which also includes RDX and MYO6 to stabilize linkages between the plasma membrane and subjacent actin cytoskeleton at the base of stereocilia. In terms of processing, phosphorylation in the motor domain, induced by EGF, results in translocation of MYO6 from the cell surface to membrane ruffles and affects F-actin dynamics. Phosphorylated in vitro by p21-activated kinase (PAK). Expressed in most tissues examined including heart, brain, placenta, pancreas, spleen, thymus, prostate, testis, ovary, small intestine and colon. Highest levels in brain, pancreas, testis and small intestine. Also expressed in fetal brain and cochlea. Isoform 1 and isoform 2, containing the small insert, and isoform 4, containing neither insert, are expressed in unpolarized epithelial cells.

Its subcellular location is the golgi apparatus. The protein resides in the trans-Golgi network membrane. The protein localises to the nucleus. It is found in the cytoplasm. It localises to the perinuclear region. Its subcellular location is the membrane. The protein resides in the clathrin-coated pit. The protein localises to the cytoplasmic vesicle. It is found in the clathrin-coated vesicle. It localises to the cell projection. Its subcellular location is the filopodium. The protein resides in the ruffle membrane. The protein localises to the microvillus. It is found in the cytosol. It localises to the autophagosome. Its subcellular location is the endosome. The protein resides in the clathrin-coated vesicle membrane. In terms of biological role, myosins are actin-based motor molecules with ATPase activity. Unconventional myosins serve in intracellular movements. Myosin 6 is a reverse-direction motor protein that moves towards the minus-end of actin filaments. Has slow rate of actin-activated ADP release due to weak ATP binding. Functions in a variety of intracellular processes such as vesicular membrane trafficking and cell migration. Required for the structural integrity of the Golgi apparatus via the p53-dependent pro-survival pathway. Appears to be involved in a very early step of clathrin-mediated endocytosis in polarized epithelial cells. Together with TOM1, mediates delivery of endocytic cargo to autophagosomes thereby promoting autophagosome maturation and driving fusion with lysosomes. Links TOM1 with autophagy receptors, such as TAX1BP1; CALCOCO2/NDP52 and OPTN. May act as a regulator of F-actin dynamics. As part of the DISP complex, may regulate the association of septins with actin and thereby regulate the actin cytoskeleton. May play a role in transporting DAB2 from the plasma membrane to specific cellular targets. May play a role in the extension and network organization of neurites. Required for structural integrity of inner ear hair cells. Required for the correct localization of CLIC5 and RDX at the stereocilium base. Modulates RNA polymerase II-dependent transcription. The protein is Unconventional myosin-VI of Homo sapiens (Human).